Consider the following 493-residue polypeptide: MIAIVVSRADSASEHIGEHLLDLGDWERRDDPSRPDADGGGTYYRTDGFELREFDDLHIYLDDPAAAFGGGAGDETNDAASDDTDETPEFLAFVSRHSGETGELLTAHVTGNFGPAPYGGEPDTLARAAPGAEKRVVEALAAHAPEGYDVGIECTHHGPTDTSVPSLFVELGSDEPQWTDADAARAVARAVLDLRGTDADLVTDAGETTDEIDDDPHPRHVVGFGGGHYAPRFTRIVRETEWAVGHVGADWALGELGAPDANRDVIEQAFARSKANVAVIEGEKPDLEATVEALGHRVVSETWVRAVGDRPLPLVERLESDLATIDEGLRFGEVVPASPDAIRVRGLPEDLLSRAQGVDADAARVAVETNAVAFDTEQAGTRAAGSVAFADDEVSPGYDDLVADLAGVLERGYDTVDITDGAVIARETAFDPELAAKRGVPEGPAFGRLASGESVEVDGETIAPADVSRERTNRFPIDSPTDSAAEPPTEPSE.

Basic and acidic residues predominate over residues 22 to 37 (DLGDWERRDDPSRPDA). 2 disordered regions span residues 22 to 44 (DLGDWERRDDPSRPDADGGGTYY) and 441 to 493 (PEGP…EPSE).

The protein belongs to the DtdA deacylase family. As to quaternary structure, monomer. Zn(2+) serves as cofactor.

It catalyses the reaction a D-aminoacyl-tRNA + H2O = a tRNA + a D-alpha-amino acid + H(+). The enzyme catalyses glycyl-tRNA(Ala) + H2O = tRNA(Ala) + glycine + H(+). D-aminoacyl-tRNA deacylase with broad substrate specificity. By recycling D-aminoacyl-tRNA to D-amino acids and free tRNA molecules, this enzyme counteracts the toxicity associated with the formation of D-aminoacyl-tRNA entities in vivo. This is D-aminoacyl-tRNA deacylase from Halorubrum lacusprofundi (strain ATCC 49239 / DSM 5036 / JCM 8891 / ACAM 34).